A 316-amino-acid chain; its full sequence is N-acetyl-gamma-glutamyl-phosphate reductase (316 aa).

Cys136 is a catalytic residue.

This sequence belongs to the NAGSA dehydrogenase family. Type 1 subfamily.

It localises to the cytoplasm. It catalyses the reaction N-acetyl-L-glutamate 5-semialdehyde + phosphate + NADP(+) = N-acetyl-L-glutamyl 5-phosphate + NADPH + H(+). It functions in the pathway amino-acid biosynthesis; L-arginine biosynthesis; N(2)-acetyl-L-ornithine from L-glutamate: step 3/4. Functionally, catalyzes the NADPH-dependent reduction of N-acetyl-5-glutamyl phosphate to yield N-acetyl-L-glutamate 5-semialdehyde. The protein is N-acetyl-gamma-glutamyl-phosphate reductase of Xanthomonas oryzae pv. oryzae (strain MAFF 311018).